Reading from the N-terminus, the 610-residue chain is Fimbrin (610 aa).

EF-hand domains lie at 7–42 and 43–78; these read SEIS…CGEK and VTGV…ARQH. Asp20, Asn22, Asp24, Gln26, Glu31, Asp56, Asp58, Asn60, Ser62, and Glu67 together coordinate Ca(2+). 2 actin-binding regions span residues 102-365 and 366-608; these read YSGS…NTHP and ALEP…QVEM. Calponin-homology (CH) domains are found at residues 116-232, 260-365, 379-488, and 501-608; these read DEEK…KIGL, LPVE…NTHP, TREE…RGHV, and PIAD…QVEM.

Functionally, binds to actin. The protein is Fimbrin (fimA) of Dictyostelium discoideum (Social amoeba).